A 378-amino-acid chain; its full sequence is Enoyl-[acyl-carrier-protein] reductase 1, mitochondrial (378 aa).

Y59 serves as the catalytic Proton donor. Residues N151, 180–183, 203–206, 284–287, 309–311, and K372 contribute to the NADP(+) site; these read NSQV, RDGK, YGGM, and YWL.

It belongs to the zinc-containing alcohol dehydrogenase family. Quinone oxidoreductase subfamily. As to quaternary structure, homodimer.

Its subcellular location is the mitochondrion matrix. The catalysed reaction is a 2,3-saturated acyl-[ACP] + NADP(+) = a (2E)-enoyl-[ACP] + NADPH + H(+). Catalyzes the NADPH-dependent reduction of trans-2-enoyl thioesters in mitochondrial fatty acid synthesis (fatty acid synthesis type II). Fatty acid chain elongation in mitochondria uses acyl carrier protein (ACP) as an acyl group carrier, but the enzyme accepts both ACP and CoA thioesters as substrates in vitro. Required for respiration and the maintenance of the mitochondrial compartment. This Debaryomyces hansenii (strain ATCC 36239 / CBS 767 / BCRC 21394 / JCM 1990 / NBRC 0083 / IGC 2968) (Yeast) protein is Enoyl-[acyl-carrier-protein] reductase 1, mitochondrial (ETR1).